The primary structure comprises 356 residues: Carbohydrate sulfotransferase 10 (356 aa).

The Cytoplasmic segment spans residues 1–6 (MHHQWL). A helical; Signal-anchor for type II membrane protein membrane pass occupies residues 7–27 (LLAACFWVIFMFMVASKFITL). Residues 28–356 (TFKDPDVYSA…GYQKPDFLLN (329 aa)) lie on the Lumenal side of the membrane. A glycan (N-linked (GlcNAc...) asparagine) is linked at Asn-99. 3'-phosphoadenylyl sulfate is bound by residues 127-133 (PKVGNTQ) and 189-197 (RDPFERLIS). Asn-228 and Asn-316 each carry an N-linked (GlcNAc...) asparagine glycan.

Belongs to the sulfotransferase 2 family. In fetal tissues, it is predominantly expressed in brain, and weakly expressed in lung, kidney and liver. In adult, it is highly expressed in brain, testis, ovary, expressed at intermediate level in heart, pancreas, skeletal muscle, spleen and thymus, and weakly expressed in other tissues. In brain, it is expressed at higher level in the frontal lobe.

It is found in the golgi apparatus membrane. It carries out the reaction 3-O-{beta-D-GlcA-(1-&gt;[3)-alpha-D-Xyl-(1-&gt;3)-beta-D-GlcA-(1-&gt;](n)-4)-beta-D-Xyl-(1-&gt;4)-Rib-ol-P-Rib-ol-P-3-beta-D-GalNAc-(1-&gt;3)-beta-D-GlcNAc-(1-&gt;4)-O-6-P-alpha-D-Man}-L-Thr-[protein] + 3'-phosphoadenylyl sulfate = 3-O-{O-3-S-beta-D-GlcA-(1-&gt;[3)-alpha-D-Xyl-(1-&gt;3)-beta-D-GlcA-(1-&gt;](n)-4)-beta-D-Xyl-(1-&gt;4)-Rib-ol-P-Rib-ol-P-3-beta-D-GalNAc-(1-&gt;3)-beta-D-GlcNAc-(1-&gt;4)-O-6-P-alpha-D-Man}-L-Thr-[protein] + adenosine 3',5'-bisphosphate + H(+). The catalysed reaction is 17beta-estradiol 3-O-(beta-D-glucuronate) + 3'-phosphoadenylyl sulfate = 17beta-estradiol 3-O-(3-sulfo-beta-D-glucuronate) + adenosine 3',5'-bisphosphate + H(+). It catalyses the reaction 17beta-estradiol 3-O-(beta-D-glucuronate) 17-sulfate + 3'-phosphoadenylyl sulfate = 17beta-estradiol 3-O-(3-sulfo-beta-D-glucuronate) 17-sulfate + adenosine 3',5'-bisphosphate + H(+). The enzyme catalyses 17beta-estradiol 17-O-(beta-D-glucuronate) + 3'-phosphoadenylyl sulfate = 17beta-estradiol 17-O-(3-sulfo-beta-D-glucuronate) + adenosine 3',5'-bisphosphate + H(+). It carries out the reaction 16alpha,17beta-estriol 3-O-(beta-D-glucuronate) + 3'-phosphoadenylyl sulfate = 16alpha,17beta-estriol 3-O-(3-sulfo-beta-D-glucuronate) + adenosine 3',5'-bisphosphate + H(+). The catalysed reaction is 16alpha,17beta-estriol 16-O-(beta-D-glucuronate) + 3'-phosphoadenylyl sulfate = 16alpha,17beta-estriol 16-O-(3-sulfo-beta-D-glucuronate) + adenosine 3',5'-bisphosphate + H(+). It catalyses the reaction 16alpha,17beta-estriol 17-O-(beta-D-glucuronate) + 3'-phosphoadenylyl sulfate = 16alpha,17beta-estriol 17-O-(3-sulfo-beta-D-glucuronate) + adenosine 3',5'-bisphosphate + H(+). The enzyme catalyses estrone 3-O-(beta-D-glucuronate) + 3'-phosphoadenylyl sulfate = estrone 3-O-(3-sulfo-beta-D-glucuronate) + adenosine 3',5'-bisphosphate + H(+). It carries out the reaction 3alpha,20alpha-dihydroxy-5beta-pregnane 3-O-(beta-D-glucuronate) + 3'-phosphoadenylyl sulfate = 3alpha,20alpha-dihydroxy-5beta-pregnane 3-O-(3-sulfo-beta-D-glucuronate) + adenosine 3',5'-bisphosphate + H(+). The catalysed reaction is testosterone 17-O-(beta-D-glucuronate) + 3'-phosphoadenylyl sulfate = testosterone 17-O-(3-sulfo-beta-D-glucuronate) + adenosine 3',5'-bisphosphate + H(+). It catalyses the reaction 3beta-androst-5-en-17-one 3-O-(beta-D-glucuronate) + 3'-phosphoadenylyl sulfate = 3beta-androst-5-en-17-one 3-O-(3-sulfo-beta-D-glucuronate) + adenosine 3',5'-bisphosphate + H(+). The enzyme catalyses 3alpha,17alpha-dihydroxy-5beta-androstane-11-one-17beta-carboxylate 3-O-(beta-D-glucuronate) + 3'-phosphoadenylyl sulfate = 3alpha,17alpha-dihydroxy-5beta-androstane-11-one-17beta-carboxylate 3-O-(3-sulfo-beta-D-glucuronate) + adenosine 3',5'-bisphosphate + H(+). It carries out the reaction 3alpha-hydroxyetiocholan-17-one 3-O-(beta-D-glucuronate) + 3'-phosphoadenylyl sulfate = 3alpha-hydroxyetiocholan-17-one 3-O-(3-sulfo-beta-D-glucuronate) + adenosine 3',5'-bisphosphate + H(+). Its pathway is steroid metabolism. It participates in protein modification; carbohydrate sulfation. In terms of biological role, catalyzes the transfer of sulfate from 3'-phosphoadenylyl sulfate (PAPS) to position 3 of terminal glucuronic acid of both protein- and lipid-linked oligosaccharides. Participates in biosynthesis of HNK-1 carbohydrate structure 3-O-sulfo-beta-D-GlcA-(1-&gt;3)-beta-D-Gal-(1-&gt;4)-D-GlcNAc-R, a sulfated glucuronyl-lactosaminyl residue carried by many neural recognition molecules, which is involved in cell interactions during ontogenetic development and in synaptic plasticity in the adult. May be indirectly involved in synapse plasticity of the hippocampus, via its role in HNK-1 biosynthesis. Sulfates terminal glucuronyl residue of the laminin globular (LG)-domain binding epitope on DAG1/alpha-dystroglycan and prevents further polymerization by LARGE1 glycosyltransferase. Likely defines the chain length of LG epitope, conferring binding specificity to extracellular matrix components. Plays a role in down-regulating the steroid hormones. Sulfates glucuronidated estrogens and androgens with an impact in hormone cycle and fertility. Has a preference for glucuronyl moiety at the 3-hydroxyl group of a sterol ring rather than the 17-hydroxyl group, showing high catalytic efficiency for 17beta-estradiol 3-O-(beta-D-glucuronate) and dehydroepiandrosterone 3-O-(beta-D-glucuronate) hormones. The polypeptide is Carbohydrate sulfotransferase 10 (Homo sapiens (Human)).